The primary structure comprises 338 residues: Aspartate-semialdehyde dehydrogenase (338 aa).

Residues 13-16 (SGAV) and 41-42 (RS) contribute to the NADP(+) site. R101 serves as a coordination point for phosphate. C132 serves as the catalytic Acyl-thioester intermediate. Residue Q159 participates in substrate binding. NADP(+) contacts are provided by residues 162–163 (SG) and P187. K216 contributes to the phosphate binding site. Residue R238 coordinates substrate. The active-site Proton acceptor is the H245. N317 lines the NADP(+) pocket.

The protein belongs to the aspartate-semialdehyde dehydrogenase family. As to quaternary structure, homodimer.

The enzyme catalyses L-aspartate 4-semialdehyde + phosphate + NADP(+) = 4-phospho-L-aspartate + NADPH + H(+). It functions in the pathway amino-acid biosynthesis; L-lysine biosynthesis via DAP pathway; (S)-tetrahydrodipicolinate from L-aspartate: step 2/4. It participates in amino-acid biosynthesis; L-methionine biosynthesis via de novo pathway; L-homoserine from L-aspartate: step 2/3. Its pathway is amino-acid biosynthesis; L-threonine biosynthesis; L-threonine from L-aspartate: step 2/5. Its function is as follows. Catalyzes the NADPH-dependent formation of L-aspartate-semialdehyde (L-ASA) by the reductive dephosphorylation of L-aspartyl-4-phosphate. This chain is Aspartate-semialdehyde dehydrogenase, found in Shewanella sp. (strain DB6705).